The sequence spans 152 residues: FMN reductase (NADH) RutF (152 aa).

The protein belongs to the non-flavoprotein flavin reductase family. RutF subfamily.

It catalyses the reaction FMNH2 + NAD(+) = FMN + NADH + 2 H(+). Its function is as follows. Catalyzes the reduction of FMN to FMNH2 which is used to reduce pyrimidine by RutA via the Rut pathway. The sequence is that of FMN reductase (NADH) RutF from Shigella dysenteriae serotype 1 (strain Sd197).